Consider the following 371-residue polypeptide: Cytoplasmic dynein intermediate light chain DYN3 (371 aa).

The protein belongs to the dynein light intermediate chain DYN3 family. In terms of assembly, the cytoplasmic dynein is composed of at least two heavy chains and a number of intermediate and light chains.

It localises to the cytoplasm. The protein localises to the cytoskeleton. Its function is as follows. Component of the cytoplasmic dynein which acts as a motor for the intracellular retrograde motility of vesicles and organelles along microtubules. May play an important role in the proper orientation of the mitotic spindle into the budding daughter cell yeast. Probably required for normal progression of the cell cycle. In Eremothecium gossypii (strain ATCC 10895 / CBS 109.51 / FGSC 9923 / NRRL Y-1056) (Yeast), this protein is Cytoplasmic dynein intermediate light chain DYN3 (DYN3).